The chain runs to 345 residues: Ribonucleoside-diphosphate reductase small chain 2 (345 aa).

Residue M1 is modified to N-acetylmethionine. The active site involves Y131. Phosphoserine is present on residues S169 and S332. A Phosphothreonine modification is found at T334. Residue S336 is modified to Phosphoserine. K337 participates in a covalent cross-link: Glycyl lysine isopeptide (Lys-Gly) (interchain with G-Cter in ubiquitin).

It belongs to the ribonucleoside diphosphate reductase small chain family. As to quaternary structure, heterotetramer of two large (R1) and two small (R2) subunits. S.cerevisiae has two different R1 subunits (RNR1 and RNR3) and two different R2 subunits (RNR2 and RNR4). The functional form of the small subunits is a RNR2-RNR4 heterodimer, where RNR2 provides the iron-radical center and RNR4 is required for proper folding of RNR2 and assembly with the large subunits. Under normal growth conditions, the active form of the large subunits is a homodimer of the constitutively expressed RNR1. In damaged cells or cells arrested for DNA synthesis, the reductase consists of multiple species because of the association of the small subunits (RNR2-RNR4) with either the RNR1 homodimer or a heterodimer of RNR1 and the damage-inducible RNR3. Interacts with DIF1.

The protein localises to the nucleus. The enzyme catalyses a 2'-deoxyribonucleoside 5'-diphosphate + [thioredoxin]-disulfide + H2O = a ribonucleoside 5'-diphosphate + [thioredoxin]-dithiol. Its function is as follows. Provides the precursors necessary for DNA synthesis. Catalyzes the biosynthesis of deoxyribonucleotides from the corresponding ribonucleotides. RNR4 is required for proper folding of RNR2 and assembly with the large subunits. This is Ribonucleoside-diphosphate reductase small chain 2 (RNR4) from Saccharomyces cerevisiae (strain ATCC 204508 / S288c) (Baker's yeast).